The following is a 546-amino-acid chain: Chaperonin GroEL 1 (546 aa).

Residues 29-32 (TLGP), 86-90 (DGTTT), Gly-414, and Asp-499 each bind ATP.

The protein belongs to the chaperonin (HSP60) family. In terms of assembly, forms a cylinder of 14 subunits composed of two heptameric rings stacked back-to-back. Interacts with the co-chaperonin GroES.

Its subcellular location is the cytoplasm. It catalyses the reaction ATP + H2O + a folded polypeptide = ADP + phosphate + an unfolded polypeptide.. Its function is as follows. Together with its co-chaperonin GroES, plays an essential role in assisting protein folding. The GroEL-GroES system forms a nano-cage that allows encapsulation of the non-native substrate proteins and provides a physical environment optimized to promote and accelerate protein folding. The polypeptide is Chaperonin GroEL 1 (Roseiflexus sp. (strain RS-1)).